Here is a 232-residue protein sequence, read N- to C-terminus: Ion-translocating oxidoreductase complex subunit E (232 aa).

6 helical membrane-spanning segments follow: residues 18–38, 39–59, 69–89, 93–113, 127–147, and 182–202; these read GLVQLLGLCPLLAVTATLTNA, LGLGVATMLVLIGSNILVSLV, IPVFVMIIAALVTAVQLLINA, GLYLSLGIFLPLIVTNCIIIG, AAFDGLMMGLGFTLVLAVLGA, and PFLLAMLPPGAFIVMGLLIAL.

This sequence belongs to the NqrDE/RnfAE family. In terms of assembly, the complex is composed of six subunits: RnfA, RnfB, RnfC, RnfD, RnfE and RnfG.

It localises to the cell inner membrane. Functionally, part of a membrane-bound complex that couples electron transfer with translocation of ions across the membrane. This chain is Ion-translocating oxidoreductase complex subunit E, found in Shewanella sp. (strain ANA-3).